We begin with the raw amino-acid sequence, 554 residues long: Calcium/calmodulin-dependent protein kinase type II delta 2 chain (554 aa).

The 259-residue stretch at 13–271 folds into the Protein kinase domain; that stretch reads YQLFEELGKG…AAEAPKHPWI (259 aa). Residues 19–27 and Lys-42 each bind ATP; that span reads LGKGAFSVV. Residue Asp-135 is the Proton acceptor of the active site. Position 286 is a phosphothreonine (Thr-286). Phosphoserine is present on residues Ser-314 and Ser-318. Disordered regions lie at residues 324-375 and 392-413; these read PDGV…TIED and WQPS…SSVQ. A compositionally biased stretch (polar residues) spans 330 to 340; it reads NNKTNLASSPK. At Thr-372 the chain carries Phosphothreonine.

This sequence belongs to the protein kinase superfamily. CAMK Ser/Thr protein kinase family. CaMK subfamily. As to quaternary structure, CAMK2 is composed of four different chains: alpha, beta, gamma, and delta. The different isoforms assemble into homo- or heteromultimeric holoenzymes composed of 8 to 12 subunits. In terms of tissue distribution, first detected at 18 hpf. At 24 hpf, expressed in discrete anterior locations and along either side of the midline. At 48 hpf, expression is predominantly in the forebrain, and then accumulates in the forebrain, hindbrain, and retinal epithelium at 72 hpf.

It catalyses the reaction L-seryl-[protein] + ATP = O-phospho-L-seryl-[protein] + ADP + H(+). The enzyme catalyses L-threonyl-[protein] + ATP = O-phospho-L-threonyl-[protein] + ADP + H(+). With respect to regulation, autophosphorylation of CAMK2 plays an important role in the regulation of the kinase activity. Functionally, caM-kinase II (CAMK2) is a prominent kinase in the central nervous system. The chain is Calcium/calmodulin-dependent protein kinase type II delta 2 chain (camk2d2) from Danio rerio (Zebrafish).